The primary structure comprises 445 residues: GTPase Der (445 aa).

2 consecutive EngA-type G domains span residues 3 to 167 (PVIA…YAGQ) and 180 to 353 (IKIA…AAAM). GTP-binding positions include 9-16 (GRPNVGKS), 56-60 (DTGGF), 119-122 (NKAE), 186-193 (GRPNVGKS), 233-237 (DTAGL), and 298-301 (NKWD). The region spanning 354-438 (AKLPTPKLTR…PLRIEFRSSN (85 aa)) is the KH-like domain.

The protein belongs to the TRAFAC class TrmE-Era-EngA-EngB-Septin-like GTPase superfamily. EngA (Der) GTPase family. Associates with the 50S ribosomal subunit.

Its function is as follows. GTPase that plays an essential role in the late steps of ribosome biogenesis. In Burkholderia ambifaria (strain MC40-6), this protein is GTPase Der.